The sequence spans 145 residues: Putative antiporter subunit mnhG2 (145 aa).

Helical transmembrane passes span 11–31 (IAAVMLLLGSFIALISAIGIV), 51–71 (VLLTLIGVLIYFIVNTGFFSV), and 72–92 (RLLLSLVFINLTSPVGMHLVA).

This sequence belongs to the CPA3 antiporters (TC 2.A.63) subunit G family. As to quaternary structure, may form a heterooligomeric complex that consists of seven subunits: mnhA2, mnhB2, mnhC2, mnhD2, mnhE2, mnhF2 and mnhG2.

Its subcellular location is the cell membrane. This Staphylococcus aureus (strain COL) protein is Putative antiporter subunit mnhG2 (mnhG2).